The chain runs to 688 residues: Potassium-transporting ATPase ATP-binding subunit (688 aa).

The next 4 membrane-spanning stretches (helical) occupy residues 35-55 (VMMV…VQFA), 62-82 (AVFS…ANLA), 219-239 (IALS…VVTL), and 260-280 (VLVA…LSAI). Asp-313 (4-aspartylphosphate intermediate) is an active-site residue. Residues Asp-350, Glu-354, 383–390 (FSAQTRMS), and Lys-401 each bind ATP. The Mg(2+) site is built by Asp-524 and Asp-528. A run of 3 helical transmembrane segments spans residues 594-614 (FAIL…LNLM), 622-642 (AILS…PLAL), and 668-688 (VVLP…MGWI).

This sequence belongs to the cation transport ATPase (P-type) (TC 3.A.3) family. Type IA subfamily. The system is composed of three essential subunits: KdpA, KdpB and KdpC.

It localises to the cell inner membrane. It carries out the reaction K(+)(out) + ATP + H2O = K(+)(in) + ADP + phosphate + H(+). Functionally, part of the high-affinity ATP-driven potassium transport (or Kdp) system, which catalyzes the hydrolysis of ATP coupled with the electrogenic transport of potassium into the cytoplasm. This subunit is responsible for energy coupling to the transport system and for the release of the potassium ions to the cytoplasm. The chain is Potassium-transporting ATPase ATP-binding subunit from Tolumonas auensis (strain DSM 9187 / NBRC 110442 / TA 4).